The primary structure comprises 232 residues: Ornithine carbamoyltransferase (232 aa).

Residues Gln15, Arg39, and 66–69 contribute to the carbamoyl phosphate site; that span reads HPTQ. Residues Asn99, Asp163, and 167 to 168 contribute to the L-ornithine site; that span reads SM. Carbamoyl phosphate is bound by residues 204–207 and Thr232; that span reads HCLP.

The protein belongs to the aspartate/ornithine carbamoyltransferase superfamily. OTCase family.

It localises to the cytoplasm. The enzyme catalyses carbamoyl phosphate + L-ornithine = L-citrulline + phosphate + H(+). The protein operates within amino-acid biosynthesis; L-arginine biosynthesis; L-arginine from L-ornithine and carbamoyl phosphate: step 1/3. This is Ornithine carbamoyltransferase (argF) from Neisseria animalis.